Consider the following 273-residue polypeptide: Proteasome subunit beta type-10 (273 aa).

Residue methionine 1 is modified to N-acetylmethionine. The propeptide at 1 to 39 (MLKQAVEPTGGFSFENCQRNASLEHVLPGLRVPHARKTG) is removed in mature form. Threonine 40 serves as the catalytic Nucleophile.

This sequence belongs to the peptidase T1B family. As to quaternary structure, the 26S proteasome consists of a 20S proteasome core and two 19S regulatory subunits. The 20S proteasome core is composed of 28 subunits that are arranged in four stacked rings, resulting in a barrel-shaped structure. The two end rings are each formed by seven alpha subunits, and the two central rings are each formed by seven beta subunits. The catalytic chamber with the active sites is on the inside of the barrel. Component of the immunoproteasome, where it displaces the equivalent housekeeping subunit PSMB7. Component of the spermatoproteasome, a form of the proteasome specifically found in testis. Post-translationally, autocleaved. The resulting N-terminal Thr residue of the mature subunit is responsible for the nucleophile proteolytic activity. Detected in liver (at protein level).

It localises to the cytoplasm. The protein resides in the nucleus. It carries out the reaction Cleavage of peptide bonds with very broad specificity.. Its function is as follows. The proteasome is a multicatalytic proteinase complex which is characterized by its ability to cleave peptides with Arg, Phe, Tyr, Leu, and Glu adjacent to the leaving group at neutral or slightly basic pH. The proteasome has an ATP-dependent proteolytic activity. This subunit is involved in antigen processing to generate class I binding peptides. Plays a role in determining the T-cell repertoire for an antiviral T-cell response. This is Proteasome subunit beta type-10 (Psmb10) from Mus musculus (Mouse).